We begin with the raw amino-acid sequence, 216 residues long: MOB kinase activator 3C (216 aa).

Zn(2+) contacts are provided by Cys82, Cys87, His164, and His169.

This sequence belongs to the MOB1/phocein family.

In terms of biological role, may regulate the activity of kinases. In Mus musculus (Mouse), this protein is MOB kinase activator 3C (Mob3c).